Here is a 178-residue protein sequence, read N- to C-terminus: ATP-dependent protease subunit HslV (178 aa).

Thr7 is a catalytic residue. Residues Gly162, Cys165, and Thr168 each contribute to the Na(+) site.

This sequence belongs to the peptidase T1B family. HslV subfamily. As to quaternary structure, a double ring-shaped homohexamer of HslV is capped on each side by a ring-shaped HslU homohexamer. The assembly of the HslU/HslV complex is dependent on binding of ATP.

The protein localises to the cytoplasm. The enzyme catalyses ATP-dependent cleavage of peptide bonds with broad specificity.. Its activity is regulated as follows. Allosterically activated by HslU binding. Functionally, protease subunit of a proteasome-like degradation complex believed to be a general protein degrading machinery. This Cupriavidus pinatubonensis (strain JMP 134 / LMG 1197) (Cupriavidus necator (strain JMP 134)) protein is ATP-dependent protease subunit HslV.